A 716-amino-acid chain; its full sequence is Zinc finger protein 840 (716 aa).

Residues 42-113 (VRFRDVAVVF…EREVTGDPCP (72 aa)) enclose the KRAB domain. 18 consecutive C2H2-type zinc fingers follow at residues 151-173 (YECD…QKIH), 207-229 (FECN…QSMH), 235-257 (YKCD…QRFH), 277-299 (FSCN…LLIH), 305-327 (YTCN…QRTH), 333-355 (HKCD…QKTH), 361-383 (FSCN…QQIH), 389-411 (FICS…KGTH), 417-439 (YQCT…QKTH), 445-467 (FACN…KKIH), 473-495 (YECG…KKIH), 501-523 (FVCN…QRTH), 549-571 (FPCN…QQIH), 577-599 (FICS…KGTH), 605-627 (YQCT…QKTH), 633-655 (FTCN…KKIH), 661-683 (YECG…KKIH), and 689-711 (FVCN…QITH). The segment at 515–548 (KLSRHQRTHNKKENSSKSVSNLNKHQKTHAGEKP) is disordered.

This sequence belongs to the krueppel C2H2-type zinc-finger protein family.

It is found in the nucleus. Functionally, may be involved in transcriptional regulation. This is Zinc finger protein 840 (ZNF840P) from Homo sapiens (Human).